We begin with the raw amino-acid sequence, 354 residues long: Deubiquitination-protection protein dph1 (354 aa).

The 78-residue stretch at 1–78 (MTNISLTIKA…SIHLVKTLGQ (78 aa)) folds into the Ubiquitin-like domain. Residues 309–353 (PPEERYAEQLSQLNEMGFVDFERNVQALRRSGGNVQGAIESLLSD) form the UBA domain.

Functionally, protects ubiquitin chains against dissambly by deubiquitinating enzymes thereby promoting protein degradation. This chain is Deubiquitination-protection protein dph1 (dph1), found in Schizosaccharomyces pombe (strain 972 / ATCC 24843) (Fission yeast).